A 232-amino-acid chain; its full sequence is tRNA (guanine-N(1)-)-methyltransferase (232 aa).

An S-adenosyl-L-methionine-binding site is contributed by G116.

This sequence belongs to the RNA methyltransferase TrmD family. In terms of assembly, homodimer.

It localises to the cytoplasm. The catalysed reaction is guanosine(37) in tRNA + S-adenosyl-L-methionine = N(1)-methylguanosine(37) in tRNA + S-adenosyl-L-homocysteine + H(+). Specifically methylates guanosine-37 in various tRNAs. This chain is tRNA (guanine-N(1)-)-methyltransferase, found in Chlorobium luteolum (strain DSM 273 / BCRC 81028 / 2530) (Pelodictyon luteolum).